A 501-amino-acid chain; its full sequence is Lysine--tRNA ligase (501 aa).

Positions 411 and 418 each coordinate Mg(2+).

Belongs to the class-II aminoacyl-tRNA synthetase family. Homodimer. The cofactor is Mg(2+).

The protein resides in the cytoplasm. The catalysed reaction is tRNA(Lys) + L-lysine + ATP = L-lysyl-tRNA(Lys) + AMP + diphosphate. This chain is Lysine--tRNA ligase, found in Clostridium perfringens (strain SM101 / Type A).